The primary structure comprises 101 residues: uncharacterized protein (101 aa).

This is an uncharacterized protein from Mycoplasma pneumoniae (strain ATCC 29342 / M129 / Subtype 1) (Mycoplasmoides pneumoniae).